The sequence spans 105 residues: Small ribosomal subunit protein uS10 (105 aa).

It belongs to the universal ribosomal protein uS10 family. As to quaternary structure, part of the 30S ribosomal subunit.

Functionally, involved in the binding of tRNA to the ribosomes. This chain is Small ribosomal subunit protein uS10, found in Oleidesulfovibrio alaskensis (strain ATCC BAA-1058 / DSM 17464 / G20) (Desulfovibrio alaskensis).